The primary structure comprises 323 residues: Acetyl-coenzyme A carboxylase carboxyl transferase subunit alpha (323 aa).

One can recognise a CoA carboxyltransferase C-terminal domain in the interval 39 to 293 (RLSKKSQQLT…RRALGDSLRQ (255 aa)).

This sequence belongs to the AccA family. As to quaternary structure, acetyl-CoA carboxylase is a heterohexamer composed of biotin carboxyl carrier protein (AccB), biotin carboxylase (AccC) and two subunits each of ACCase subunit alpha (AccA) and ACCase subunit beta (AccD).

Its subcellular location is the cytoplasm. The catalysed reaction is N(6)-carboxybiotinyl-L-lysyl-[protein] + acetyl-CoA = N(6)-biotinyl-L-lysyl-[protein] + malonyl-CoA. The protein operates within lipid metabolism; malonyl-CoA biosynthesis; malonyl-CoA from acetyl-CoA: step 1/1. Its function is as follows. Component of the acetyl coenzyme A carboxylase (ACC) complex. First, biotin carboxylase catalyzes the carboxylation of biotin on its carrier protein (BCCP) and then the CO(2) group is transferred by the carboxyltransferase to acetyl-CoA to form malonyl-CoA. The chain is Acetyl-coenzyme A carboxylase carboxyl transferase subunit alpha from Burkholderia pseudomallei (strain 1106a).